The chain runs to 1049 residues: GPI inositol-deacylase (1049 aa).

Residues A39–L59 form a helical membrane-spanning segment. Residue S222 is part of the active site. 8 consecutive transmembrane segments (helical) span residues L699 to L719, C742 to A762, P798 to V818, I867 to I887, S917 to I937, W944 to V964, V986 to L1006, and L1009 to F1029.

This sequence belongs to the GPI inositol-deacylase family.

It localises to the endoplasmic reticulum membrane. Its function is as follows. Involved in inositol deacylation of GPI-anchored proteins which plays important roles in the quality control and ER-associated degradation of GPI-anchored proteins. This Phaeosphaeria nodorum (strain SN15 / ATCC MYA-4574 / FGSC 10173) (Glume blotch fungus) protein is GPI inositol-deacylase (BST1).